We begin with the raw amino-acid sequence, 272 residues long: 2-dehydro-3-deoxyphosphooctonate aldolase (272 aa).

Belongs to the KdsA family.

The protein resides in the cytoplasm. It catalyses the reaction D-arabinose 5-phosphate + phosphoenolpyruvate + H2O = 3-deoxy-alpha-D-manno-2-octulosonate-8-phosphate + phosphate. The protein operates within carbohydrate biosynthesis; 3-deoxy-D-manno-octulosonate biosynthesis; 3-deoxy-D-manno-octulosonate from D-ribulose 5-phosphate: step 2/3. It functions in the pathway bacterial outer membrane biogenesis; lipopolysaccharide biosynthesis. The polypeptide is 2-dehydro-3-deoxyphosphooctonate aldolase (Geotalea daltonii (strain DSM 22248 / JCM 15807 / FRC-32) (Geobacter daltonii)).